A 641-amino-acid polypeptide reads, in one-letter code: Tetracycline resistance protein TetQ (641 aa).

A tr-type G domain is found at 1–244; the sequence is MNIINLGILA…AITSFILPPA (244 aa). GTP contacts are provided by residues 10 to 17, 74 to 78, and 128 to 131; these read AHIDAGKT, DTPGH, and NKID.

Belongs to the TRAFAC class translation factor GTPase superfamily. Classic translation factor GTPase family. TetM/TetO subfamily.

Functionally, abolishes the inhibitory effect of tetracyclin on protein synthesis by a non-covalent modification of the ribosomes. The chain is Tetracycline resistance protein TetQ (tetQ) from Bacteroides thetaiotaomicron.